Reading from the N-terminus, the 280-residue chain is Putative pyruvate, phosphate dikinase regulatory protein (280 aa).

154–161 is a binding site for ADP; it reads GVSRTSKT.

Belongs to the pyruvate, phosphate/water dikinase regulatory protein family. PDRP subfamily.

The catalysed reaction is N(tele)-phospho-L-histidyl/L-threonyl-[pyruvate, phosphate dikinase] + ADP = N(tele)-phospho-L-histidyl/O-phospho-L-threonyl-[pyruvate, phosphate dikinase] + AMP + H(+). It carries out the reaction N(tele)-phospho-L-histidyl/O-phospho-L-threonyl-[pyruvate, phosphate dikinase] + phosphate + H(+) = N(tele)-phospho-L-histidyl/L-threonyl-[pyruvate, phosphate dikinase] + diphosphate. In terms of biological role, bifunctional serine/threonine kinase and phosphorylase involved in the regulation of the pyruvate, phosphate dikinase (PPDK) by catalyzing its phosphorylation/dephosphorylation. In Nitrobacter hamburgensis (strain DSM 10229 / NCIMB 13809 / X14), this protein is Putative pyruvate, phosphate dikinase regulatory protein.